The chain runs to 320 residues: Lipoyl synthase (320 aa).

Cys-67, Cys-72, Cys-78, Cys-93, Cys-97, Cys-100, and Ser-307 together coordinate [4Fe-4S] cluster. One can recognise a Radical SAM core domain in the interval 79 to 296 (FNHGTATFMI…RDKANEMGFE (218 aa)).

The protein belongs to the radical SAM superfamily. Lipoyl synthase family. [4Fe-4S] cluster serves as cofactor.

The protein resides in the cytoplasm. It carries out the reaction [[Fe-S] cluster scaffold protein carrying a second [4Fe-4S](2+) cluster] + N(6)-octanoyl-L-lysyl-[protein] + 2 oxidized [2Fe-2S]-[ferredoxin] + 2 S-adenosyl-L-methionine + 4 H(+) = [[Fe-S] cluster scaffold protein] + N(6)-[(R)-dihydrolipoyl]-L-lysyl-[protein] + 4 Fe(3+) + 2 hydrogen sulfide + 2 5'-deoxyadenosine + 2 L-methionine + 2 reduced [2Fe-2S]-[ferredoxin]. It functions in the pathway protein modification; protein lipoylation via endogenous pathway; protein N(6)-(lipoyl)lysine from octanoyl-[acyl-carrier-protein]: step 2/2. Catalyzes the radical-mediated insertion of two sulfur atoms into the C-6 and C-8 positions of the octanoyl moiety bound to the lipoyl domains of lipoate-dependent enzymes, thereby converting the octanoylated domains into lipoylated derivatives. The polypeptide is Lipoyl synthase (Haemophilus influenzae (strain PittGG)).